A 671-amino-acid chain; its full sequence is Transcription factor xilB (671 aa).

The zn(2)-C6 fungal-type DNA-binding region spans 11-46; it reads CHSCYTRKQKASESDSICDRQYPCNHCTRRRRPEEC. Residues 48-90 are disordered; it reads YGPPPVKVPSCPPVPADQSETQPRPVESARPTRETPVDDSEAH. A compositionally biased stretch (pro residues) spans 49-62; the sequence is GPPPVKVPSCPPVP. Residues 77–90 show a composition bias toward basic and acidic residues; the sequence is RPTRETPVDDSEAH. The tract at residues 148-593 is fungal transcription factor domain; that stretch reads PERQIIDFLV…ATLLFARSVQ (446 aa). Positions 629-650 are disordered; it reads WPSLEAGDPYSMPDNFPSMAQD.

It is found in the nucleus. Its function is as follows. Transcription factor; part of the gene cluster that mediates the biosynthesis of the 6-methyl-2-pyrone derivative xylariolide D. May play a role in the regulation of the expression of the highly reducing polyketide synthase xilA and the cytochroe P450 monooxygenase xilC. In Penicillium rubens (strain ATCC 28089 / DSM 1075 / NRRL 1951 / Wisconsin 54-1255) (Penicillium chrysogenum), this protein is Transcription factor xilB.